The following is a 100-amino-acid chain: Small ribosomal subunit protein uS14c (100 aa).

The protein belongs to the universal ribosomal protein uS14 family. Part of the 30S ribosomal subunit.

The protein resides in the plastid. It localises to the chloroplast. In terms of biological role, binds 16S rRNA, required for the assembly of 30S particles. In Vitis vinifera (Grape), this protein is Small ribosomal subunit protein uS14c.